The following is a 383-amino-acid chain: DNA-directed RNA polymerase subunit alpha (383 aa).

The alpha N-terminal domain (alpha-NTD) stretch occupies residues 1 to 240; it reads MEKKTGLIQF…NLFHQISPPL (240 aa). The tract at residues 306–383 is alpha C-terminal domain (alpha-CTD); sequence IDKQMNDSVN…RFNMELLPTK (78 aa).

It belongs to the RNA polymerase alpha chain family. As to quaternary structure, in plastids the minimal PEP RNA polymerase catalytic core is composed of four subunits: alpha, beta, beta', and beta''. When a (nuclear-encoded) sigma factor is associated with the core the holoenzyme is formed, which can initiate transcription.

Its subcellular location is the plastid. The protein localises to the chloroplast. It carries out the reaction RNA(n) + a ribonucleoside 5'-triphosphate = RNA(n+1) + diphosphate. In terms of biological role, DNA-dependent RNA polymerase catalyzes the transcription of DNA into RNA using the four ribonucleoside triphosphates as substrates. The protein is DNA-directed RNA polymerase subunit alpha of Staurastrum punctulatum (Green alga).